Here is a 591-residue protein sequence, read N- to C-terminus: PDZ and LIM domain protein 5 (591 aa).

Serine 2 carries the N-acetylserine modification. Serine 2 carries the phosphoserine modification. The PDZ domain occupies 2–85 (SNYNVSLVGP…SLNMTLQRAS (84 aa)). Lysine 89 carries the post-translational modification N6-acetyllysine; alternate. N6-succinyllysine; alternate is present on lysine 89. Lysine 89 participates in a covalent cross-link: Glycyl lysine isopeptide (Lys-Gly) (interchain with G-Cter in SUMO2); alternate. A phosphoserine mark is found at serine 111, serine 134, and serine 137. Disordered regions lie at residues 125–240 (YNKV…GPPR) and 255–334 (THSD…SNRP). The span at 134–143 (SVSSPKVTSI) shows a compositional bias: polar residues. The segment covering 144-161 (PSPSSAFTPAHAATSSHA) has biased composition (low complexity). Positions 162–174 (SPPPVAAVTPPPL) are enriched in pro residues. Polar residues-rich tracts occupy residues 183–195 (ANPS…SPPN) and 207–217 (PTVTSVCSESA). 2 positions are modified to phosphoserine: serine 228 and serine 260. Composition is skewed to basic and acidic residues over residues 258–273 (DASK…DWRP) and 293–304 (EHLKESENDNAK). Residues 310–329 (PEPSQQSASPLSAAESLESP) show a composition bias toward low complexity. A phosphoserine mark is found at serine 313 and serine 318. Lysine 346 carries the N6-acetyllysine modification. The disordered stretch occupies residues 348 to 398 (VGSTSVKSPSWQRPNQAAPSTGRISNSASSSGTGAPMKPAVGPPQPSDQDT). The segment covering 349 to 380 (GSTSVKSPSWQRPNQAAPSTGRISNSASSSGT) has biased composition (polar residues). 2 positions are modified to phosphoserine: serine 355 and serine 357. 3 LIM zinc-binding domains span residues 413 to 472 (PMCA…FFAP), 472 to 531 (PECG…LFGT), and 531 to 591 (TICR…SVNF).

As to quaternary structure, interacts with various PKC isoforms through the LIM domains. Interacts with actin and alpha-actinin through the PDZ domain. Interacts (via LIM domains) with SIPA1L1/SPAR; this interaction may occur preferentially with isoform 1. Detected in brain, in neurons, including in hippocampal neurons, and glial cells (at protein level). Detected in heart and skeletal muscle.

It is found in the postsynaptic density. The protein localises to the presynapse. Its subcellular location is the postsynapse. The protein resides in the cytoplasm. It localises to the cytosol. May play an important role in the heart development by scaffolding PKC to the Z-disk region. May play a role in the regulation of cardiomyocyte expansion. Isoforms lacking the LIM domains may negatively modulate the scaffolding activity of isoform 1. Overexpression promotes the development of heart hypertrophy. Contributes to the regulation of dendritic spine morphogenesis in neurons. May be required to restrain postsynaptic growth of excitatory synapses. Isoform 1, but not isoform 2, expression favors spine thinning and elongation. This is PDZ and LIM domain protein 5 (Pdlim5) from Rattus norvegicus (Rat).